Consider the following 208-residue polypeptide: Probable hydrolase YcaC (208 aa).

The active site involves cysteine 118.

As to quaternary structure, homooctamer composed of two tetrameric rings.

In Escherichia coli (strain K12), this protein is Probable hydrolase YcaC (ycaC).